A 644-amino-acid chain; its full sequence is Phosphomethylpyrimidine synthase (644 aa).

Residues Asn236, Met265, Tyr294, His330, Ser350–Gly352, Asp391–Arg394, and Glu430 each bind substrate. Residue His434 coordinates Zn(2+). Position 457 (Tyr457) interacts with substrate. Residue His498 coordinates Zn(2+). [4Fe-4S] cluster is bound by residues Cys578, Cys581, and Cys586.

The protein belongs to the ThiC family. Homodimer. [4Fe-4S] cluster serves as cofactor.

It catalyses the reaction 5-amino-1-(5-phospho-beta-D-ribosyl)imidazole + S-adenosyl-L-methionine = 4-amino-2-methyl-5-(phosphooxymethyl)pyrimidine + CO + 5'-deoxyadenosine + formate + L-methionine + 3 H(+). The protein operates within cofactor biosynthesis; thiamine diphosphate biosynthesis. Functionally, catalyzes the synthesis of the hydroxymethylpyrimidine phosphate (HMP-P) moiety of thiamine from aminoimidazole ribotide (AIR) in a radical S-adenosyl-L-methionine (SAM)-dependent reaction. The chain is Phosphomethylpyrimidine synthase from Aliivibrio fischeri (strain ATCC 700601 / ES114) (Vibrio fischeri).